We begin with the raw amino-acid sequence, 42 residues long: Aryl-alcohol dehydrogenase (42 aa).

This sequence belongs to the zinc-containing alcohol dehydrogenase family. Homodimer. Zn(2+) is required as a cofactor.

The enzyme catalyses an aromatic primary alcohol + NAD(+) = an aromatic aldehyde + NADH + H(+). Its function is as follows. Oxidizes primary alcohols with an aromatic or cyclohex-1-ene ring. It is highly specific for benzyl alcohol. This Acinetobacter guillouiae (Acinetobacter genomosp. 11) protein is Aryl-alcohol dehydrogenase.